The primary structure comprises 299 residues: Circadian clock oscillator protein KaiA (299 aa).

Residues M1 to P135 are psR domain, binds oxidized quinones. One can recognise a KaiA N-terminal domain in the interval M1–L169. The tract at residues G170–R178 is flexible linker. Positions K179–R287 constitute a KaiA C-terminal domain.

The protein belongs to the KaiA family. Homodimer. The KaiABC1 complex composition changes during the circadian cycle to control KaiC1 phosphorylation. Complexes KaiC1(6), KaiA(2-4):KaiC1(6), KaiB(6):KaiC1(6) and KaiC1(6):KaiB(6):KaiA(12) are among the most important forms, many form cooperatively. KaiA and CikA bind to the same region of the KaiB(fs) form and therefore compete. Interacts with KaiC1 but not KaiC2 or KaiC3. Interacts with itself, not seen to interact with other Kai proteins.

In terms of biological role, key component of the KaiABC oscillator complex, which constitutes the main circadian regulator in cyanobacteria. Complex composition changes during the circadian cycle to control KaiC phosphorylation. KaiA stimulates KaiC autophosphorylation, while KaiB sequesters KaiA, leading to KaiC autodephosphorylation. KaiA binding to the KaiC CII domain during the subjective day yields KaiA(2-4):KaiC(6) complexes which stimulate KaiC autophosphorylation. Phospho-Ser-431 KaiC accumulation triggers binding of KaiB during the subjective night to form the KaiB(6):KaiC(6) complex, leading to changes in the output regulators CikA and SasA. KaiB(6):KaiC(6) formation exposes a site for KaiA binding on KaiB that sequesters KaiA from KaiC's CII domain, making the KaiC(6):KaiB(6):KaiA(12) complex resulting in KaiC autodephosphorylation. Complete dephosphorylation of KaiC leads to dissociation of KaiA(2):KaiB(1), completing 1 cycle of the Kai oscillator. Component of the oscillator and circadian clock in this organism, enhances fitness in a rhythmic environment. Stimulates KaiC1 to autophosphorylate, has no effect on the kinase activity of KaiC2 or KaiC3. Its function is as follows. Binds oxidized quinones via the N-terminal PsR domain, allowing it to sense redox changes and possibly mediate clock input. The sequence is that of Circadian clock oscillator protein KaiA from Synechocystis sp. (strain ATCC 27184 / PCC 6803 / Kazusa).